Consider the following 488-residue polypeptide: Inosine-5'-monophosphate dehydrogenase (488 aa).

2 consecutive CBS domains span residues 95–153 (VISN…SIKI) and 157–216 (MTKE…AKDE). NAD(+)-binding positions include aspartate 250 and 300-302 (GIG). K(+)-binding residues include glycine 302 and glycine 304. Residue serine 305 participates in IMP binding. Position 307 (cysteine 307) interacts with K(+). The active-site Thioimidate intermediate is cysteine 307. Residues 340-342 (DGG), 363-364 (GS), and 387-391 (YRGMG) contribute to the IMP site. Arginine 403 acts as the Proton acceptor in catalysis. Glutamate 417 is an IMP binding site. A disordered region spans residues 467 to 488 (AGLAESHPHDVQITKESPNYSF). Residues glutamate 471, serine 472, and histidine 473 each coordinate K(+).

Belongs to the IMPDH/GMPR family. Homotetramer. Requires K(+) as cofactor.

It catalyses the reaction IMP + NAD(+) + H2O = XMP + NADH + H(+). It participates in purine metabolism; XMP biosynthesis via de novo pathway; XMP from IMP: step 1/1. With respect to regulation, mycophenolic acid (MPA) is a non-competitive inhibitor that prevents formation of the closed enzyme conformation by binding to the same site as the amobile flap. In contrast, mizoribine monophosphate (MZP) is a competitive inhibitor that induces the closed conformation. MPA is a potent inhibitor of mammalian IMPDHs but a poor inhibitor of the bacterial enzymes. MZP is a more potent inhibitor of bacterial IMPDH. Functionally, catalyzes the conversion of inosine 5'-phosphate (IMP) to xanthosine 5'-phosphate (XMP), the first committed and rate-limiting step in the de novo synthesis of guanine nucleotides, and therefore plays an important role in the regulation of cell growth. The polypeptide is Inosine-5'-monophosphate dehydrogenase (Staphylococcus saprophyticus subsp. saprophyticus (strain ATCC 15305 / DSM 20229 / NCIMB 8711 / NCTC 7292 / S-41)).